The primary structure comprises 59 residues: uncharacterized protein (59 aa).

The interval 27–59 is disordered; the sequence is SCFQNRPPEPASFQNLRPEPASLQNLRTEPTSF. The segment covering 48–59 has biased composition (polar residues); sequence SLQNLRTEPTSF.

This is an uncharacterized protein from Homo sapiens (Human).